A 285-amino-acid polypeptide reads, in one-letter code: Glutamate racemase (285 aa).

Substrate contacts are provided by residues 30 to 31 (DS) and 62 to 63 (YG). Residue Cys94 is the Proton donor/acceptor of the active site. 95-96 (NT) contributes to the substrate binding site. Cys206 acts as the Proton donor/acceptor in catalysis. 207–208 (TH) is a binding site for substrate.

It belongs to the aspartate/glutamate racemases family.

It carries out the reaction L-glutamate = D-glutamate. It participates in cell wall biogenesis; peptidoglycan biosynthesis. Functionally, provides the (R)-glutamate required for cell wall biosynthesis. The sequence is that of Glutamate racemase from Pectobacterium atrosepticum (strain SCRI 1043 / ATCC BAA-672) (Erwinia carotovora subsp. atroseptica).